A 786-amino-acid polypeptide reads, in one-letter code: Probable glutamine--tRNA ligase (786 aa).

Residues 181–198 are compositionally biased toward basic and acidic residues; that stretch reads DLAPKKKEKKPEGPKPSK. The segment at 181 to 218 is disordered; sequence DLAPKKKEKKPEGPKPSKDAAAAATAPGTKNQKEASPE. The 'HIGH' region motif lies at 276–286; it reads PEPNGVLHIGH. ATP is bound by residues 277 to 279 and 283 to 289; these read EPN and HIGHAKA. L-glutamine-binding residues include D309 and Y444. ATP is bound by residues T463, 492 to 493, and 500 to 502; these read RL and VSK. Positions 499–503 match the 'KMSKS' region motif; sequence VVSKR.

It belongs to the class-I aminoacyl-tRNA synthetase family.

It carries out the reaction tRNA(Gln) + L-glutamine + ATP = L-glutaminyl-tRNA(Gln) + AMP + diphosphate. The chain is Probable glutamine--tRNA ligase from Caenorhabditis elegans.